Here is a 168-residue protein sequence, read N- to C-terminus: MRKAIEIKSEVVSEIVEKLQKSSAAVVVDYKGLTVEEVTELRKQMREAGVDYKVYKNTLVRRAAKEVGIEQFNDELLVGTNAIAFGYDDPVAPARILKGFMDSHPKMKLKMGIVEGAFYDESKIVEMANIPSREVLIAKLLGSLKAPVSNFAYLIDAIAKKAEGQEEA.

This sequence belongs to the universal ribosomal protein uL10 family. In terms of assembly, part of the ribosomal stalk of the 50S ribosomal subunit. The N-terminus interacts with L11 and the large rRNA to form the base of the stalk. The C-terminus forms an elongated spine to which L12 dimers bind in a sequential fashion forming a multimeric L10(L12)X complex.

Functionally, forms part of the ribosomal stalk, playing a central role in the interaction of the ribosome with GTP-bound translation factors. This chain is Large ribosomal subunit protein uL10, found in Clostridioides difficile (strain 630) (Peptoclostridium difficile).